A 133-amino-acid polypeptide reads, in one-letter code: Triatox (133 aa).

Positions 1–22 (MTTLRVLLAVCCAAYCILAEDV) are cleaved as a signal peptide. One can recognise a CUB domain in the interval 23-125 (TVPANGELKL…RAMCTVYSAE (103 aa)). Cys-70 and Cys-86 are joined by a disulfide.

It belongs to the venom CUB family. In terms of tissue distribution, expressed by the venom gland.

The protein resides in the secreted. In terms of biological role, may function as an antimicrobial peptide and may be related to the innate defense of the insect in the salivary glands. In Triatoma infestans (Assassin bug), this protein is Triatox.